Consider the following 205-residue polypeptide: Small ribosomal subunit protein uS5 (205 aa).

The S5 DRBM domain occupies 49-112 (LVDEVLCIDM…TNAKLNIVKV (64 aa)).

The protein belongs to the universal ribosomal protein uS5 family. Part of the 30S ribosomal subunit. Contacts protein S4.

In terms of biological role, with S4 and S12 plays an important role in translational accuracy. In Methanocorpusculum labreanum (strain ATCC 43576 / DSM 4855 / Z), this protein is Small ribosomal subunit protein uS5.